Here is a 324-residue protein sequence, read N- to C-terminus: Signal peptidase I (324 aa).

Over 1-3 the chain is Periplasmic; it reads MAN. The chain crosses the membrane as a helical span at residues 4–22; sequence MFALILVIATLVTGILWCV. Topologically, residues 23–58 are cytoplasmic; sequence DKFVFAPKRRARQAAAQTASGDALDNATLNKVAPKP. A helical transmembrane segment spans residues 59-77; that stretch reads GWLETGASVFPVLAIVLIV. Topologically, residues 78–324 are periplasmic; the sequence is RSFLYEPFQI…VRLSRIGGIH (247 aa). Active-site residues include serine 91 and lysine 146.

It belongs to the peptidase S26 family.

It localises to the cell inner membrane. It catalyses the reaction Cleavage of hydrophobic, N-terminal signal or leader sequences from secreted and periplasmic proteins.. The sequence is that of Signal peptidase I (lepB) from Salmonella typhi.